We begin with the raw amino-acid sequence, 219 residues long: Large ribosomal subunit protein uL29m (219 aa).

The interval 77–97 (ASKYPLPKPVSPEKLEKREST) is disordered. The span at 87 to 97 (SPEKLEKREST) shows a compositional bias: basic and acidic residues.

It belongs to the universal ribosomal protein uL29 family. As to quaternary structure, component of the mitochondrial large ribosomal subunit. Mature mitochondrial ribosomes consist of a small (37S) and a large (54S) subunit. The 37S subunit contains at least 33 different proteins and 1 molecule of RNA (15S). The 54S subunit contains at least 45 different proteins and 1 molecule of RNA (21S).

Its subcellular location is the mitochondrion. The polypeptide is Large ribosomal subunit protein uL29m (mrpl4) (Emericella nidulans (strain FGSC A4 / ATCC 38163 / CBS 112.46 / NRRL 194 / M139) (Aspergillus nidulans)).